Reading from the N-terminus, the 417-residue chain is Serine hydroxymethyltransferase 2 (417 aa).

(6S)-5,6,7,8-tetrahydrofolate is bound by residues Leu121 and 125 to 127; that span reads GHL. Lys229 is modified (N6-(pyridoxal phosphate)lysine). 354–356 serves as a coordination point for (6S)-5,6,7,8-tetrahydrofolate; the sequence is SPF.

It belongs to the SHMT family. In terms of assembly, homodimer. Pyridoxal 5'-phosphate serves as cofactor.

Its subcellular location is the cytoplasm. The catalysed reaction is (6R)-5,10-methylene-5,6,7,8-tetrahydrofolate + glycine + H2O = (6S)-5,6,7,8-tetrahydrofolate + L-serine. Its pathway is one-carbon metabolism; tetrahydrofolate interconversion. It functions in the pathway amino-acid biosynthesis; glycine biosynthesis; glycine from L-serine: step 1/1. Functionally, catalyzes the reversible interconversion of serine and glycine with tetrahydrofolate (THF) serving as the one-carbon carrier. This reaction serves as the major source of one-carbon groups required for the biosynthesis of purines, thymidylate, methionine, and other important biomolecules. Also exhibits THF-independent aldolase activity toward beta-hydroxyamino acids, producing glycine and aldehydes, via a retro-aldol mechanism. This Pseudomonas putida (strain ATCC 47054 / DSM 6125 / CFBP 8728 / NCIMB 11950 / KT2440) protein is Serine hydroxymethyltransferase 2.